A 90-amino-acid polypeptide reads, in one-letter code: Small ribosomal subunit protein bS20 (90 aa).

Over residues 1 to 11 (MANIKSSEKDI) the composition is skewed to basic and acidic residues. Disordered regions lie at residues 1–29 (MANI…SRLR) and 69–90 (SKNA…SAAA).

It belongs to the bacterial ribosomal protein bS20 family.

Functionally, binds directly to 16S ribosomal RNA. The polypeptide is Small ribosomal subunit protein bS20 (Leptospira borgpetersenii serovar Hardjo-bovis (strain L550)).